The sequence spans 624 residues: APC membrane recruitment protein 2 (624 aa).

Disordered stretches follow at residues 1 to 308 (MDSH…PPSE) and 342 to 596 (EDVG…IPVS). Residues 74–91 (SGKKEDAGGGEAQGKDAP) show a composition bias toward basic and acidic residues. Residues 101 to 111 (SASSSVAKSHS) are compositionally biased toward low complexity. 2 stretches are compositionally biased toward basic and acidic residues: residues 120 to 132 (GRPE…ENAE) and 247 to 258 (RRLEELCGERPD). Low complexity-rich tracts occupy residues 272 to 282 (ITGDIPITTIP) and 295 to 307 (AAAP…DPPS). Over residues 406-416 (TGGGGGGGGGT) the composition is skewed to gly residues. Positions 450–464 (NNKEEQKGREKEQHE) are enriched in basic and acidic residues. Polar residues predominate over residues 535–549 (PITTTCSLKTPSSTV).

The protein belongs to the Amer family.

Its subcellular location is the cell membrane. In terms of biological role, negative regulator of the canonical Wnt signaling pathway involved in neuroectodermal patterning. Acts by specifically binding phosphatidylinositol 4,5-bisphosphate (PtdIns(4,5)P2), translocating to the cell membrane and interacting with key regulators of the canonical Wnt signaling pathway, such as components of the beta-catenin destruction complex. The sequence is that of APC membrane recruitment protein 2 (AMER2) from Gallus gallus (Chicken).